The sequence spans 446 residues: Oxysterols receptor LXR-beta (446 aa).

The segment covering 1 to 28 (MSSPTSSLDTPLPGNGSPQPSTSSTSPT) has biased composition (low complexity). Residues 1–69 (MSSPTSSLDT…PERKRKKGPA (69 aa)) are disordered. The transactivation AF-1; required for ligand-independent transactivation function stretch occupies residues 1–76 (MSSPTSSLDT…GPAPKMLGHE (76 aa)). Positions 75-152 (HELCRVCGDK…AGMREQCVLS (78 aa)) form a DNA-binding region, nuclear receptor. 2 NR C4-type zinc fingers span residues 78–98 (CRVC…CEGC) and 116–140 (CRGS…LRKC). The tract at residues 160–201 (KIQKQQQQQPPPPTEPASGSSARPAASPGTSEASSQGSGEGE) is disordered. The span at 175-196 (PASGSSARPAASPGTSEASSQG) shows a compositional bias: low complexity. The transactivation AF-2; required for ligand-dependent transactivation function; mediates interaction with CCAR2 stretch occupies residues 205–446 (LTAAQELMIQ…LLSEIWDVHE (242 aa)). Positions 208 to 446 (AQELMIQQLV…LLSEIWDVHE (239 aa)) constitute an NR LBD domain. Residues lysine 395 and lysine 433 each participate in a glycyl lysine isopeptide (Lys-Gly) (interchain with G-Cter in SUMO2) cross-link.

This sequence belongs to the nuclear hormone receptor family. NR1 subfamily. Forms a heterodimer with RXR. Interacts with CCAR2 (via N-terminus) in a ligand-independent manner. Interacts (when sumoylated) with GPS2; interaction with GPS2 onto hepatic acute phase protein promoters prevents N-Cor corepressor complex dissociation. Interacts with ABCA12 and ABCA1; this interaction is required for ABCA1 localization to the cell surface and is necessary for its normal activity and stability. Sumoylated by SUMO2 at Lys-395 and Lys-433 during the hepatic acute phase response, leading to promote interaction with GPS2 and prevent N-Cor corepressor complex dissociation.

It is found in the nucleus. In terms of biological role, nuclear receptor that exhibits a ligand-dependent transcriptional activation activity. Binds preferentially to double-stranded oligonucleotide direct repeats having the consensus half-site sequence 5'-AGGTCA-3' and 4-nt spacing (DR-4). Regulates cholesterol uptake through MYLIP-dependent ubiquitination of LDLR, VLDLR and LRP8; DLDLR and LRP8. Interplays functionally with RORA for the regulation of genes involved in liver metabolism. Induces LPCAT3-dependent phospholipid remodeling in endoplasmic reticulum (ER) membranes of hepatocytes, driving SREBF1 processing and lipogenesis. Via LPCAT3, triggers the incorporation of arachidonate into phosphatidylcholines of ER membranes, increasing membrane dynamics and enabling triacylglycerols transfer to nascent very low-density lipoprotein (VLDL) particles. Via LPCAT3 also counteracts lipid-induced ER stress response and inflammation, likely by modulating SRC kinase membrane compartmentalization and limiting the synthesis of lipid inflammatory mediators. Plays an anti-inflammatory role during the hepatic acute phase response by acting as a corepressor: inhibits the hepatic acute phase response by preventing dissociation of the N-Cor corepressor complex. This is Oxysterols receptor LXR-beta (Nr1h2) from Rattus norvegicus (Rat).